The chain runs to 347 residues: Heat-inducible transcription repressor HrcA (347 aa).

This sequence belongs to the HrcA family.

Negative regulator of class I heat shock genes (grpE-dnaK-dnaJ and groELS operons). Prevents heat-shock induction of these operons. This Lactococcus lactis subsp. lactis (strain IL1403) (Streptococcus lactis) protein is Heat-inducible transcription repressor HrcA.